A 257-amino-acid chain; its full sequence is Imidazole glycerol phosphate synthase subunit HisF (257 aa).

Active-site residues include Asp11 and Asp130.

The protein belongs to the HisA/HisF family. Heterodimer of HisH and HisF.

It is found in the cytoplasm. It carries out the reaction 5-[(5-phospho-1-deoxy-D-ribulos-1-ylimino)methylamino]-1-(5-phospho-beta-D-ribosyl)imidazole-4-carboxamide + L-glutamine = D-erythro-1-(imidazol-4-yl)glycerol 3-phosphate + 5-amino-1-(5-phospho-beta-D-ribosyl)imidazole-4-carboxamide + L-glutamate + H(+). It participates in amino-acid biosynthesis; L-histidine biosynthesis; L-histidine from 5-phospho-alpha-D-ribose 1-diphosphate: step 5/9. In terms of biological role, IGPS catalyzes the conversion of PRFAR and glutamine to IGP, AICAR and glutamate. The HisF subunit catalyzes the cyclization activity that produces IGP and AICAR from PRFAR using the ammonia provided by the HisH subunit. This is Imidazole glycerol phosphate synthase subunit HisF from Aliivibrio fischeri (strain ATCC 700601 / ES114) (Vibrio fischeri).